The chain runs to 158 residues: NADPH-dependent 7-cyano-7-deazaguanine reductase (158 aa).

Residues 1 to 37 (MAKRSIKSETSPELQLGRPVTAPDSPETARLDRVPNP) are disordered. Basic and acidic residues predominate over residues 27-37 (ETARLDRVPNP). The Thioimide intermediate role is filled by C56. D63 acts as the Proton donor in catalysis. Substrate-binding positions include 78–80 (VES) and 97–98 (HE).

This sequence belongs to the GTP cyclohydrolase I family. QueF type 1 subfamily.

The protein resides in the cytoplasm. It carries out the reaction 7-aminomethyl-7-carbaguanine + 2 NADP(+) = 7-cyano-7-deazaguanine + 2 NADPH + 3 H(+). It functions in the pathway tRNA modification; tRNA-queuosine biosynthesis. Functionally, catalyzes the NADPH-dependent reduction of 7-cyano-7-deazaguanine (preQ0) to 7-aminomethyl-7-deazaguanine (preQ1). This is NADPH-dependent 7-cyano-7-deazaguanine reductase from Bradyrhizobium sp. (strain BTAi1 / ATCC BAA-1182).